The following is a 229-amino-acid chain: Potassium/proton antiporter CemA (229 aa).

Helical transmembrane passes span 7 to 27 (FTPL…SFSV), 107 to 127 (ILHF…SILG), and 189 to 209 (IISG…KYWI).

This sequence belongs to the CemA family.

Its subcellular location is the plastid. The protein localises to the chloroplast inner membrane. It carries out the reaction K(+)(in) + H(+)(out) = K(+)(out) + H(+)(in). Its function is as follows. Contributes to K(+)/H(+) antiport activity by supporting proton efflux to control proton extrusion and homeostasis in chloroplasts in a light-dependent manner to modulate photosynthesis. Prevents excessive induction of non-photochemical quenching (NPQ) under continuous-light conditions. Indirectly promotes efficient inorganic carbon uptake into chloroplasts. The chain is Potassium/proton antiporter CemA from Nicotiana sylvestris (Wood tobacco).